The following is a 359-amino-acid chain: DNA integrity scanning protein DisA (359 aa).

In terms of domain architecture, DAC spans 7 to 146 (DEVLRQTLAI…NRRYVLEGSD (140 aa)). ATP contacts are provided by residues Gly74, Leu92, and 105–109 (TRHRT).

It belongs to the DisA family. In terms of assembly, homooctamer. Requires Mg(2+) as cofactor.

The enzyme catalyses 2 ATP = 3',3'-c-di-AMP + 2 diphosphate. Participates in a DNA-damage check-point. DisA forms globular foci that rapidly scan along the chromosomes searching for lesions. Functionally, also has diadenylate cyclase activity, catalyzing the condensation of 2 ATP molecules into cyclic di-AMP (c-di-AMP). c-di-AMP likely acts as a signaling molecule that may couple DNA integrity with a cellular process. This Kineococcus radiotolerans (strain ATCC BAA-149 / DSM 14245 / SRS30216) protein is DNA integrity scanning protein DisA.